Reading from the N-terminus, the 354-residue chain is Uroporphyrinogen decarboxylase (354 aa).

Substrate contacts are provided by residues R27–R31, D77, Y154, T209, and H327.

The protein belongs to the uroporphyrinogen decarboxylase family. Homodimer.

The protein resides in the cytoplasm. The enzyme catalyses uroporphyrinogen III + 4 H(+) = coproporphyrinogen III + 4 CO2. It participates in porphyrin-containing compound metabolism; protoporphyrin-IX biosynthesis; coproporphyrinogen-III from 5-aminolevulinate: step 4/4. Functionally, catalyzes the decarboxylation of four acetate groups of uroporphyrinogen-III to yield coproporphyrinogen-III. This chain is Uroporphyrinogen decarboxylase, found in Pectobacterium carotovorum subsp. carotovorum (strain PC1).